Reading from the N-terminus, the 633-residue chain is Probable methyltransferase PMT17 (633 aa).

At 1–18 (MAKENSGHHHQTEARRKK) the chain is on the cytoplasmic side. Residues 19–39 (LTLILGVSGLCILFYVLGAWQ) form a helical; Signal-anchor for type II membrane protein membrane-spanning segment. Residues 40–633 (ANTVPSSISK…NNNNNNNNNN (594 aa)) lie on the Lumenal side of the membrane. The tract at residues 50-71 (LGCETQSNPSSSSSSSSSSESA) is disordered. The span at 59 to 70 (SSSSSSSSSSES) shows a compositional bias: low complexity. Asn87 carries N-linked (GlcNAc...) asparagine glycosylation.

This sequence belongs to the methyltransferase superfamily.

Its subcellular location is the endoplasmic reticulum membrane. This is Probable methyltransferase PMT17 from Arabidopsis thaliana (Mouse-ear cress).